A 446-amino-acid polypeptide reads, in one-letter code: Citrate/sodium symporter (446 aa).

Topologically, residues 1–27 (MTNMSQPPATEKKGVSDLLGFKIFGMP) are cytoplasmic. A helical membrane pass occupies residues 28-44 (LPLYAFALITLLLSHFY). Residues 45 to 50 (NALPTD) are Periplasmic-facing. Residues 51-71 (IVGGFAIMFIIGAIFGEIGKR) form a helical membrane-spanning segment. Residues 72–80 (LPIFNKYIG) lie on the Cytoplasmic side of the membrane. Residues 81-95 (GAPVMIFLVAAYFVY) form a helical membrane-spanning segment. At 96 to 115 (AGIFTQKEIDAISNVMDKSN) the chain is on the periplasmic side. A helical membrane pass occupies residues 116 to 130 (FLNLFIAVLITGAIL). Topologically, residues 131 to 136 (SVNRRL) are cytoplasmic. The helical transmembrane segment at 137–166 (LLKSLLGYIPTILMGIVGASIFGIAIGLVF) threads the bilayer. Residues 167-181 (GIPVDRIMMLYVLPI) lie on the Periplasmic side of the membrane. Ile-181 and Gly-183 together coordinate Na(+). The helical intramembrane region spans 182 to 189 (MGGGNGAG). Residues Asn-186 and Gly-187 each coordinate citrate. At 190–212 (AVPLSEIYHSVTGRSREEYYSTA) the chain is on the periplasmic side. Residues 213-233 (IAILTIANIFAIVFAAVLDII) form a helical membrane-spanning segment. The Cytoplasmic segment spans residues 234 to 264 (GKKHTWLSGEGELVRKASFKVEEDEKTGQIT). The helical transmembrane segment at 265-287 (HRETAVGLVLSTTCFLLAYVVAK) threads the bilayer. At 288 to 299 (KILPSIGGVAIH) the chain is on the periplasmic side. A helical transmembrane segment spans residues 300 to 315 (YFAWMVLIVAALNASG). The Cytoplasmic segment spans residues 316 to 327 (LCSPEIKAGAKR). The helical transmembrane segment at 328 to 351 (LSDFFSKQLLWVLMVGVGVCYTDL) threads the bilayer. Topologically, residues 352–359 (QEIINAIT) are periplasmic. A helical transmembrane segment spans residues 360–381 (FANVVIAAIIVIGAVLGAAIGG). Residues 382–398 (WLMGFFPIESAITAGLC) lie on the Cytoplasmic side of the membrane. Met-399 and Asn-401 together coordinate Na(+). The helical intramembrane region spans 399–406 (MANRGGSG). Positions 402, 404, and 405 each coordinate citrate. Residues 407 to 416 (DLEVLSACNR) lie on the Cytoplasmic side of the membrane. The chain crosses the membrane as a helical span at residues 417–438 (MNLISYAQISSRLGGGIVLVIA). Residue Arg-428 participates in citrate binding. Over 439-446 (SIVFGMMI) the chain is Periplasmic.

The protein belongs to the 2-hydroxycarboxylate transporter (2-HCT) (TC 2.A.24) family. As to quaternary structure, homodimer.

The protein localises to the cell inner membrane. The catalysed reaction is citrate(out) + 2 Na(+)(out) = citrate(in) + 2 Na(+)(in). Its activity is regulated as follows. In the absence of Na(+), transport is inhibited by the thiol reagents N-ethylmaleimide (NEM) and the methanethiosulfonate (MTS) derivatives MTSEA, MTSET and MTSES. However, inactivation by NEM, MTSES and MTSET is prevented by the presence of Na(+). In the absence of Na(+), the substrate citrate has no effect on the inactivation by permeable or impermeable thiol reagents. In contrast, when subsaturating concentrations of Na(+) are present, citrate significantly reduces inactivation, suggesting ordered binding of the substrate and co-ion; citrate is bound after Na(+). The membrane impermeable bulky maleimide AmdiS does not inactivate the transporter in right-side-out membrane vesicles. The apparent affinity for Na(+) decreases with increasing proton concentration. Protons cannot replace Na(+) in the translocation step but the decrease in apparent affinity for Na(+) towards lower pH suggests that protons can compete with Na(+) for the cation-binding sites. Secondary active transporter that catalyzes the uptake of citrate across the membrane with the concomitant uptake of sodium. There are conflicting data regarding exact substrate stoichiometry: the sodium/citrate stoichiometry was predicted to be 1, but the latest studies suggest that CitS transports citrate in symport with 2 sodium ions. Transports citrate as a divalent citrate anion, H-citrate(2-). Shows narrow substrate specificity and is very specific, transporting only citrate and to a low extent citromalate. Symport of Na(+) is absolutely required in the range pH 5-7 because no uptake can be detected in the absence of Na(+). Lithium can replace Na(+) in the symport reaction but it takes about a 200-fold higher concentration of Li(+) over Na(+) to achieve the same rate of uptake. This is Citrate/sodium symporter from Klebsiella pneumoniae.